A 466-amino-acid polypeptide reads, in one-letter code: 3-isopropylmalate dehydratase large subunit (466 aa).

[4Fe-4S] cluster is bound by residues Cys-347, Cys-407, and Cys-410.

The protein belongs to the aconitase/IPM isomerase family. LeuC type 1 subfamily. Heterodimer of LeuC and LeuD. The cofactor is [4Fe-4S] cluster.

The catalysed reaction is (2R,3S)-3-isopropylmalate = (2S)-2-isopropylmalate. It functions in the pathway amino-acid biosynthesis; L-leucine biosynthesis; L-leucine from 3-methyl-2-oxobutanoate: step 2/4. Its function is as follows. Catalyzes the isomerization between 2-isopropylmalate and 3-isopropylmalate, via the formation of 2-isopropylmaleate. The chain is 3-isopropylmalate dehydratase large subunit from Klebsiella pneumoniae subsp. pneumoniae (strain ATCC 700721 / MGH 78578).